The following is a 490-amino-acid chain: MSDRGRTLMVQGTTSDAGKSTLVTALCRWLARRGVAVVPFKPQNMALNSAVTADGGEIGRAQAVQAQACRLAPHTDMNPVLLKPNTDIGAQVIIHGRAVTSMDAAAYHDYKRVAMEAVLASHGRLAAAYRVVMVEGAGSPAEINLRANDIANMGFAEAVDCPVILVADIDRGGVFAHLVGTLELLSDSERERVRGFVINRFRGDIALLQPGLDWLEARTGKPVLGVLPYVSDLHLEAEDAIDTRQAAKVGPRLKVVVPVLPRISNHTDFDPLRLHPQVELSFVGPGQALPSADLIVLPGSKSVRADLAALRERGWDEAILRHLRYGGRLLGICGGLQMLGERLHDPLGLEGAAGSSAGLGLLALETTLEADKQLRNVQGRLSLEDAPLSGYEIHAGVTRGEALARPAVVLDDGRADGARSVDGNVMGTYLHGLFESTAACSALLRWAGLREVQAVDYQALRERDIERLADLVERHLDTGRLLALCGEPHA.

The GATase cobBQ-type domain occupies 252 to 439 (RLKVVVPVLP…LHGLFESTAA (188 aa)). The Nucleophile role is filled by Cys333. Residue His431 is part of the active site.

This sequence belongs to the CobB/CobQ family. CobQ subfamily.

It functions in the pathway cofactor biosynthesis; adenosylcobalamin biosynthesis. Functionally, catalyzes amidations at positions B, D, E, and G on adenosylcobyrinic A,C-diamide. NH(2) groups are provided by glutamine, and one molecule of ATP is hydrogenolyzed for each amidation. The chain is Cobyric acid synthase from Pseudomonas aeruginosa (strain LESB58).